The sequence spans 596 residues: DNA mismatch repair protein MutL (596 aa).

The protein belongs to the DNA mismatch repair MutL/HexB family.

In terms of biological role, this protein is involved in the repair of mismatches in DNA. It is required for dam-dependent methyl-directed DNA mismatch repair. May act as a 'molecular matchmaker', a protein that promotes the formation of a stable complex between two or more DNA-binding proteins in an ATP-dependent manner without itself being part of a final effector complex. The protein is DNA mismatch repair protein MutL of Leptospira borgpetersenii serovar Hardjo-bovis (strain JB197).